We begin with the raw amino-acid sequence, 252 residues long: U2 small nuclear ribonucleoprotein A' (252 aa).

LRR repeat units lie at residues Pro-41–Pro-62, Arg-63–Ala-84, and Asn-87–Gly-108. Positions Asn-121–Leu-159 constitute an LRRCT domain.

The protein belongs to the U2 small nuclear ribonucleoprotein A family. As to quaternary structure, associated with the spliceosome.

The protein resides in the nucleus. Functionally, involved in pre-mRNA splicing. The polypeptide is U2 small nuclear ribonucleoprotein A' (lea-1) (Neurospora crassa (strain ATCC 24698 / 74-OR23-1A / CBS 708.71 / DSM 1257 / FGSC 987)).